The chain runs to 272 residues: sn-1 stearoyl-lipid 9-desaturase (272 aa).

2 helical membrane passes run 11–31 (INWVNTLFFLGLHIGALFAFI) and 39–59 (AVGVALLLYWITGGLGITLGF). The Histidine box-1 signature appears at 60–65 (HRLVTH). Residues 97–101 (HRIHH) carry the Histidine box-2 motif. The chain crosses the membrane as a helical span at residues 160–180 (IALGLLLLYLGGWSFVVWGVF). Positions 230–234 (HHAFQ) match the Histidine box-3 motif.

This sequence belongs to the fatty acid desaturase type 2 family. Fe(2+) serves as cofactor.

Its subcellular location is the membrane. It carries out the reaction a 1-octadecanoyl 2-acyl-glycerolipid + 2 reduced [2Fe-2S]-[ferredoxin] + O2 + 2 H(+) = a 1-[(9Z)-octadecenoyl]-2-acyl-glycerolipid + 2 oxidized [2Fe-2S]-[ferredoxin] + 2 H2O. It participates in lipid metabolism; polyunsaturated fatty acid biosynthesis. Desaturase involved in fatty acid biosynthesis. Introduces a double bond at carbon 9 of stearoyl groups (18:0) attached to the sn-1 position of the glycerol moiety of membrane glycerolipids. Does not desaturate palmitic acid (16:0), palmitoleic acid (16:1) and cis-vaccenic acid (18:1). The sequence is that of sn-1 stearoyl-lipid 9-desaturase from Anabaena variabilis.